The primary structure comprises 559 residues: Phosphoinositide 3-phosphatase (559 aa).

In terms of domain architecture, Myotubularin phosphatase spans 120–541 (SWKSFLLENE…SSLRWWSASF (422 aa)). The Phosphocysteine intermediate role is filled by C342.

The protein belongs to the protein-tyrosine phosphatase family. Non-receptor class myotubularin subfamily.

It is found in the cytoplasm. The enzyme catalyses a 1,2-diacyl-sn-glycero-3-phospho-(1D-myo-inositol-3-phosphate) + H2O = a 1,2-diacyl-sn-glycero-3-phospho-(1D-myo-inositol) + phosphate. In terms of biological role, lipid phosphatase which dephosphorylates phosphatidylinositol 3-monophosphate (PI3P). Involved in the control of PI3P-dependent signaling and in the maintenance of endosomal system integrity. In Schizosaccharomyces pombe (strain 972 / ATCC 24843) (Fission yeast), this protein is Phosphoinositide 3-phosphatase.